Here is a 541-residue protein sequence, read N- to C-terminus: Beta-hexosaminidase subunit A2 (541 aa).

The N-terminal stretch at 1–21 (MINKFLTIFLIFSIVIIKVLS) is a signal peptide. Glu314 serves as the catalytic Proton donor. N-linked (GlcNAc...) asparagine glycosylation is found at Asn322, Asn336, Asn356, Asn435, and Asn483.

This sequence belongs to the glycosyl hydrolase 20 family.

The protein resides in the lysosome. It catalyses the reaction Hydrolysis of terminal non-reducing N-acetyl-D-hexosamine residues in N-acetyl-beta-D-hexosaminides.. In terms of biological role, responsible for the degradation of GM2 gangliosides, and a variety of other molecules containing terminal N-acetyl hexosamines. This chain is Beta-hexosaminidase subunit A2 (hexa2), found in Dictyostelium discoideum (Social amoeba).